A 124-amino-acid polypeptide reads, in one-letter code: U33-theraphotoxin-Cg1a (124 aa).

A signal peptide spans 1-17 (MKFAVAIAFTLLVCVFA). 5 cysteine pairs are disulfide-bonded: Cys26–Cys37, Cys31–Cys51, Cys36–Cys75, Cys61–Cys83, and Cys77–Cys94. Over residues 93–108 (RCQEESGKSDKSKESQ) the composition is skewed to basic and acidic residues. The tract at residues 93–124 (RCQEESGKSDKSKESQGSDESEESEESKESCG) is disordered. The segment covering 109-118 (GSDESEESEE) has biased composition (acidic residues).

It belongs to the neurotoxin 32 family. Expressed by the venom gland.

Its subcellular location is the secreted. The chain is U33-theraphotoxin-Cg1a from Chilobrachys guangxiensis (Chinese earth tiger tarantula).